Here is a 288-residue protein sequence, read N- to C-terminus: Very-long-chain (3R)-3-hydroxyacyl-CoA dehydratase 1 (288 aa).

Residues 1 to 59 (MGRLTEAAAAGGGASAARSAGPPPAPLPLSSTSPGCAAAMASSEEDGTNGGASEASDER) form a disordered region. The Cytoplasmic portion of the chain corresponds to 1-75 (MGRLTEAAAA…RRLGLLATIW (75 aa)). A helical membrane pass occupies residues 76–95 (LTFYNIAMTAGWLVLAIAMV). At 96 to 114 (RFYMEKGTHKGLYKSIQKT) the chain is on the lumenal side. A helical transmembrane segment spans residues 115–131 (LKFFQTFALLEIVHCLI). Residues 132–141 (GIVPTSVLVA) are Cytoplasmic-facing. Residues 142–159 (GVQVSSRIFMVWLVTHSI) traverse the membrane as a helical segment. Residues 160–165 (KPIQNE) lie on the Lumenal side of the membrane. The chain crosses the membrane as a helical span at residues 166–180 (ESVVLFLVAWTVTEI). The Cytoplasmic segment spans residues 181-203 (TRYSFYTFSLLDHLPYFIKWARY). A helical transmembrane segment spans residues 204 to 221 (NFFIILYPVGVAGELLTI). Active-site residues include Y210 and E217. At 222–251 (YAALPYVKKTGMFSIRLPNKYNVSFDYYYF) the chain is on the lumenal side. Residue N243 is glycosylated (N-linked (GlcNAc...) asparagine). The chain crosses the membrane as a helical span at residues 252–269 (LLITMASYIPLFPQLYFH). Over 270–288 (MLRQRRKVLHGEVIVEKDD) the chain is Cytoplasmic.

Belongs to the very long-chain fatty acids dehydratase HACD family. May interact with enzymes of the ELO family (including ELOVL1); with those enzymes that mediate condensation, the first of the four steps of the reaction cycle responsible for fatty acids elongation, may be part of a larger fatty acids elongase complex. Interacts with TECR. In terms of processing, N-glycosylated. Expressed in heart.

It localises to the endoplasmic reticulum membrane. The enzyme catalyses a very-long-chain (3R)-3-hydroxyacyl-CoA = a very-long-chain (2E)-enoyl-CoA + H2O. It catalyses the reaction (3R)-hydroxyhexadecanoyl-CoA = (2E)-hexadecenoyl-CoA + H2O. The catalysed reaction is (3R)-hydroxyoctadecanoyl-CoA = (2E)-octadecenoyl-CoA + H2O. It carries out the reaction (3R)-hydroxyeicosanoyl-CoA = (2E)-eicosenoyl-CoA + H2O. The enzyme catalyses (3R)-hydroxydocosanoyl-CoA = (2E)-docosenoyl-CoA + H2O. It catalyses the reaction (3R)-hydroxytetracosanoyl-CoA = (2E)-tetracosenoyl-CoA + H2O. The catalysed reaction is (3R)-hydroxyhexacosanoyl-CoA = (2E)-hexacosenoyl-CoA + H2O. The protein operates within lipid metabolism; fatty acid biosynthesis. Its function is as follows. Catalyzes the third of the four reactions of the long-chain fatty acids elongation cycle. This endoplasmic reticulum-bound enzymatic process, allows the addition of two carbons to the chain of long- and very long-chain fatty acids/VLCFAs per cycle. This enzyme catalyzes the dehydration of the 3-hydroxyacyl-CoA intermediate into trans-2,3-enoyl-CoA, within each cycle of fatty acid elongation. Thereby, it participates in the production of VLCFAs of different chain lengths that are involved in multiple biological processes as precursors of membrane lipids and lipid mediators. The chain is Very-long-chain (3R)-3-hydroxyacyl-CoA dehydratase 1 (HACD1) from Ovis aries (Sheep).